The sequence spans 494 residues: Costunolide synthase (494 aa).

A helical membrane pass occupies residues 3–23 (PLTIVSLVVASLFLFAFWALS). Cysteine 432 provides a ligand contact to heme.

It belongs to the cytochrome P450 family. Requires heme as cofactor.

The protein localises to the membrane. It catalyses the reaction germacra-1(10),4,11(13)-trien-12-oate + reduced [NADPH--hemoprotein reductase] + O2 = (+)-costunolide + oxidized [NADPH--hemoprotein reductase] + 2 H2O. In terms of biological role, hydroxylates germacrene A acid to 6-alpha-hydroxy-germacrne A acid, a precursor of sesquiterpene lactones that spontaneously undergoes a lactonization which yields costunolide. Costunolide can then spontaneously conjugate to glutathione or cysteine. This Cichorium intybus (Chicory) protein is Costunolide synthase (CYP71BL3).